A 292-amino-acid chain; its full sequence is Elongation factor Ts (292 aa).

The involved in Mg(2+) ion dislocation from EF-Tu stretch occupies residues 80 to 83; it reads TDFV.

This sequence belongs to the EF-Ts family.

Its subcellular location is the cytoplasm. In terms of biological role, associates with the EF-Tu.GDP complex and induces the exchange of GDP to GTP. It remains bound to the aminoacyl-tRNA.EF-Tu.GTP complex up to the GTP hydrolysis stage on the ribosome. This chain is Elongation factor Ts, found in Pediococcus pentosaceus (strain ATCC 25745 / CCUG 21536 / LMG 10740 / 183-1w).